The primary structure comprises 889 residues: Cytoplasmic aconitate hydratase (889 aa).

Residues glutamine 86 and 205-207 (DSH) each bind substrate. 3 residues coordinate [4Fe-4S] cluster: cysteine 437, cysteine 503, and cysteine 506. Substrate-binding positions include arginine 536, arginine 541, arginine 699, and 779–780 (SR).

It belongs to the aconitase/IPM isomerase family. As to quaternary structure, interacts (when associated with the 4Fe-4S) with FBXL5. Interacts with frataxin(81-210). Requires [4Fe-4S] cluster as cofactor.

The protein resides in the cytoplasm. It is found in the cytosol. It carries out the reaction citrate = D-threo-isocitrate. In terms of biological role, bifunctional iron sensor that switches between 2 activities depending on iron availability. Iron deprivation, promotes its mRNA binding activity through which it regulates the expression of genes involved in iron uptake, sequestration and utilization. Binds to iron-responsive elements (IRES) in the untranslated region of target mRNAs preventing for instance the translation of ferritin and aminolevulinic acid synthase and stabilizing the transferrin receptor mRNA. Conversely, when cellular iron levels are high, binds a 4Fe-4S cluster which precludes RNA binding activity and promotes the aconitase activity, the isomerization of citrate to isocitrate via cis-aconitate. The protein is Cytoplasmic aconitate hydratase (ACO1) of Oryctolagus cuniculus (Rabbit).